Consider the following 78-residue polypeptide: UPF0248 protein Msed_0897 (78 aa).

Belongs to the UPF0248 family.

The sequence is that of UPF0248 protein Msed_0897 from Metallosphaera sedula (strain ATCC 51363 / DSM 5348 / JCM 9185 / NBRC 15509 / TH2).